Reading from the N-terminus, the 134-residue chain is Profilin-1 (134 aa).

It belongs to the profilin family. Occurs in many kinds of cells as a complex with monomeric actin in a 1:1 ratio.

It localises to the cytoplasm. Its subcellular location is the cytoskeleton. In terms of biological role, binds to actin and affects the structure of the cytoskeleton. At high concentrations, profilin prevents the polymerization of actin, whereas it enhances it at low concentrations. By binding to PIP2, it inhibits the formation of IP3 and DG. This is Profilin-1 (PRO1) from Nicotiana tabacum (Common tobacco).